The following is a 343-amino-acid chain: Phosphatidylglycerol--prolipoprotein diacylglyceryl transferase (343 aa).

Helical transmembrane passes span 22–42 (IPIR…LIIG), 54–74 (GVIY…GRLY), 97–117 (VWEG…GAWI), and 123–143 (GIPL…AQAI). A 1,2-diacyl-sn-glycero-3-phospho-(1'-sn-glycerol) is bound at residue R145. 2 consecutive transmembrane segments (helical) span residues 193 to 213 (VVHP…VLLI) and 257 to 277 (VNSF…LLAP). The tract at residues 283 to 343 (PATLGGTPSS…SADNSGIVEK (61 aa)) is disordered. Positions 295–325 (GGDDTAETEATADTEDTEDTEDGVTDAPEAD) are enriched in acidic residues.

The protein belongs to the Lgt family.

The protein localises to the cell membrane. The catalysed reaction is L-cysteinyl-[prolipoprotein] + a 1,2-diacyl-sn-glycero-3-phospho-(1'-sn-glycerol) = an S-1,2-diacyl-sn-glyceryl-L-cysteinyl-[prolipoprotein] + sn-glycerol 1-phosphate + H(+). It functions in the pathway protein modification; lipoprotein biosynthesis (diacylglyceryl transfer). In terms of biological role, catalyzes the transfer of the diacylglyceryl group from phosphatidylglycerol to the sulfhydryl group of the N-terminal cysteine of a prolipoprotein, the first step in the formation of mature lipoproteins. The sequence is that of Phosphatidylglycerol--prolipoprotein diacylglyceryl transferase from Mycobacteroides abscessus (strain ATCC 19977 / DSM 44196 / CCUG 20993 / CIP 104536 / JCM 13569 / NCTC 13031 / TMC 1543 / L948) (Mycobacterium abscessus).